Reading from the N-terminus, the 541-residue chain is Halolysin-like extracellular serine protease Nep (541 aa).

The segment at residues 1–33 (MTRDTNSNVGRRSVLKAASALGAFLGLGGVASA) is a signal peptide (tat-type signal). A propeptide spanning residues 34-121 (TPGREPGPKK…DNATYETLEV (88 aa)) is cleaved from the precursor. In terms of domain architecture, Peptidase S8 spans 130–405 (QYAPQQVNCE…YGRVDAELAV (276 aa)). Catalysis depends on charge relay system residues Asp-157, His-198, and Ser-351. The interval 403-453 (LAVTTDPDNGDDDDDDDDDEDDPGDGECGDETNTATADGELSGGWGGNPSD) is disordered. Positions 410 to 432 (DNGDDDDDDDDDEDDPGDGECGD) are enriched in acidic residues.

It belongs to the peptidase S8 family. As to quaternary structure, monomer. In terms of processing, exported by the Tat system. The position of the signal peptide cleavage has not been experimentally proven. After transport across the membrane, the propeptide is probably processed autocatalytically, yielding the mature fully active protease.

It localises to the secreted. Its activity is regulated as follows. Dependent on high salt concentrations for activity and stability. Strongly inhibited by the serine protease inhibitors diisopropyl fluorophosphate (DFP), phenylmethyl sulfonylfluoride (PMSF) and chymostatin. Also inhibited by denaturing agents such as SDS, urea, and HCl guanidinium. Activated by thiol-containing reducing agents such as dithiotreitol (DTT) and 2-mercaptoethanol. Serine protease that hydrolyzes large proteins such as casein and gelatin. Cleaves preferentially at the carboxyl terminus of Phe, Tyr or Leu. Is also able to catalyze peptide synthesis under different salt concentrations in the presence of dimethyl sulfoxide (DMSO). The polypeptide is Halolysin-like extracellular serine protease Nep (Natrialba magadii).